Consider the following 126-residue polypeptide: Holo-[acyl-carrier-protein] synthase (126 aa).

Residues aspartate 8 and glutamate 59 each contribute to the Mg(2+) site.

This sequence belongs to the P-Pant transferase superfamily. AcpS family. Mg(2+) serves as cofactor.

It is found in the cytoplasm. It catalyses the reaction apo-[ACP] + CoA = holo-[ACP] + adenosine 3',5'-bisphosphate + H(+). Its function is as follows. Transfers the 4'-phosphopantetheine moiety from coenzyme A to a Ser of acyl-carrier-protein. In Rickettsia akari (strain Hartford), this protein is Holo-[acyl-carrier-protein] synthase.